A 261-amino-acid polypeptide reads, in one-letter code: Cyclin-J18-like (261 aa).

It belongs to the cyclin family.

This Oryza sativa subsp. japonica (Rice) protein is Cyclin-J18-like.